A 52-amino-acid polypeptide reads, in one-letter code: Large ribosomal subunit protein bL32c (52 aa).

Belongs to the bacterial ribosomal protein bL32 family.

Its subcellular location is the plastid. It localises to the chloroplast. This chain is Large ribosomal subunit protein bL32c, found in Aethionema grandiflorum (Persian stone-cress).